Reading from the N-terminus, the 299-residue chain is ATP phosphoribosyltransferase (299 aa).

Belongs to the ATP phosphoribosyltransferase family. Long subfamily. In terms of assembly, equilibrium between an active dimeric form, an inactive hexameric form and higher aggregates. Interconversion between the various forms is largely reversible and is influenced by the natural substrates and inhibitors of the enzyme. Requires Mg(2+) as cofactor.

The protein localises to the cytoplasm. The catalysed reaction is 1-(5-phospho-beta-D-ribosyl)-ATP + diphosphate = 5-phospho-alpha-D-ribose 1-diphosphate + ATP. The protein operates within amino-acid biosynthesis; L-histidine biosynthesis; L-histidine from 5-phospho-alpha-D-ribose 1-diphosphate: step 1/9. Feedback inhibited by histidine. Functionally, catalyzes the condensation of ATP and 5-phosphoribose 1-diphosphate to form N'-(5'-phosphoribosyl)-ATP (PR-ATP). Has a crucial role in the pathway because the rate of histidine biosynthesis seems to be controlled primarily by regulation of HisG enzymatic activity. In Buchnera aphidicola subsp. Melaphis rhois, this protein is ATP phosphoribosyltransferase.